The chain runs to 254 residues: Pyruvate dehydrogenase complex repressor (254 aa).

The HTH gntR-type domain maps to 9–77 (PKLSDVIEQQ…QGGGTFVQSS (69 aa)). A DNA-binding region (H-T-H motif) is located at residues 37–56 (ERELAKQFDVSRPSLREAIQ).

Functionally, transcriptional repressor for the pyruvate dehydrogenase complex genes aceEF and lpd. The protein is Pyruvate dehydrogenase complex repressor (pdhR) of Escherichia coli O6:H1 (strain CFT073 / ATCC 700928 / UPEC).